The sequence spans 234 residues: MSSTPDTPSRQPIRALTPIEGRVLGVLKEKQHTVPDTYPLSLNALTAGCNQKTARAPVMNVTEAEVVVAIDGLKGLSLVFEGSSSRVPRFEHNMNRVLGVPSQSAALLAMLLLRGPQTAAELRLNTVRLHAFADISSVEGFLDELAEHEPPYVVKLPRAAGEREHRWMHLLGGEINVDSFAAAGAALADESVAPSELERLRAEQRDLSNRVQRLEALVEHMASQLGIDPDALGA.

It belongs to the UPF0502 family.

In Cupriavidus pinatubonensis (strain JMP 134 / LMG 1197) (Cupriavidus necator (strain JMP 134)), this protein is UPF0502 protein Reut_B4455.